The chain runs to 342 residues: Small GTPase LIP1 (342 aa).

Residues 12 to 285 form a small GTPase-like region; sequence KEQILAPLCG…FHGDPYKYNN (274 aa). GTP-binding positions include 29-36, 90-94, and 160-163; these read GDSGVGKT, DVSGH, and NKAD. Disordered stretches follow at residues 274–313 and 323–342; these read TSFH…TPDN and SVQE…DINV. A compositionally biased stretch (polar residues) spans 323 to 333; the sequence is SVQETTNNGSA.

The protein belongs to the small GTPase superfamily.

It localises to the nucleus. Its subcellular location is the cytoplasm. Its function is as follows. Functional small GTPase that acts as a negative factor controlling the light-dependent period shortening of circadian rhythms and light-induced phase resetting during the subjective night. May protect the clock from excessive or mistimed light. Suppresses red and blue light-mediated photomorphogenesis and is required for light-controlled inhibition of endoreplication and tolerance to salt stress. The entrainment of the circadian clock is independent from the other pleiotropic effects. Could be a regulator of seedling establishment. The sequence is that of Small GTPase LIP1 from Arabidopsis thaliana (Mouse-ear cress).